The chain runs to 158 residues: Endoribonuclease YbeY (158 aa).

His114, His118, and His124 together coordinate Zn(2+).

Belongs to the endoribonuclease YbeY family. It depends on Zn(2+) as a cofactor.

Its subcellular location is the cytoplasm. In terms of biological role, single strand-specific metallo-endoribonuclease involved in late-stage 70S ribosome quality control and in maturation of the 3' terminus of the 16S rRNA. This Legionella pneumophila (strain Paris) protein is Endoribonuclease YbeY.